The following is a 257-amino-acid chain: UPF0246 protein Shewmr4_2963 (257 aa).

It belongs to the UPF0246 family.

The protein is UPF0246 protein Shewmr4_2963 of Shewanella sp. (strain MR-4).